Consider the following 617-residue polypeptide: KIF-binding protein (617 aa).

The interval 48–83 (ALLGPAPEDDDERAADDGPVDQALGAGEPRDAEGPG) is disordered. Ser-174 carries the phosphoserine modification.

The protein belongs to the KIF-binding protein family. As to quaternary structure, interacts with KIF1B; positively regulates KIF1B microtubule motor activity. Interacts with STMN2.

It localises to the cytoplasm. The protein resides in the cytoskeleton. Activator of KIF1B plus-end-directed microtubule motor activity. Required for organization of axonal microtubules, and axonal outgrowth and maintenance during peripheral and central nervous system development. This chain is KIF-binding protein (Kifbp), found in Rattus norvegicus (Rat).